Consider the following 301-residue polypeptide: Quinolinate synthase (301 aa).

Iminosuccinate contacts are provided by H21 and S38. C83 contributes to the [4Fe-4S] cluster binding site. Iminosuccinate contacts are provided by residues 109–111 (YIN) and S126. C169 lines the [4Fe-4S] cluster pocket. Residues 195 to 197 (HPE) and T212 contribute to the iminosuccinate site. C257 serves as a coordination point for [4Fe-4S] cluster.

It belongs to the quinolinate synthase family. Type 2 subfamily. [4Fe-4S] cluster serves as cofactor.

It is found in the cytoplasm. It carries out the reaction iminosuccinate + dihydroxyacetone phosphate = quinolinate + phosphate + 2 H2O + H(+). The protein operates within cofactor biosynthesis; NAD(+) biosynthesis; quinolinate from iminoaspartate: step 1/1. Functionally, catalyzes the condensation of iminoaspartate with dihydroxyacetone phosphate to form quinolinate. This chain is Quinolinate synthase, found in Clostridium perfringens (strain ATCC 13124 / DSM 756 / JCM 1290 / NCIMB 6125 / NCTC 8237 / Type A).